A 725-amino-acid polypeptide reads, in one-letter code: Phosphoribosylformylglycinamidine synthase subunit PurL (725 aa).

His41 is an active-site residue. ATP is bound by residues Tyr44 and Lys83. Glu85 is a Mg(2+) binding site. Substrate is bound by residues 86-89 (SHNH) and Arg108. His87 (proton acceptor) is an active-site residue. A Mg(2+)-binding site is contributed by Asp109. Substrate is bound at residue Gln231. Residue Asp259 coordinates Mg(2+). Residue 303-305 (ESQ) coordinates substrate. ATP is bound by residues Asp485 and Gly522. Asn523 is a binding site for Mg(2+). Ser525 contributes to the substrate binding site.

It belongs to the FGAMS family. Monomer. Part of the FGAM synthase complex composed of 1 PurL, 1 PurQ and 2 PurS subunits.

The protein resides in the cytoplasm. It catalyses the reaction N(2)-formyl-N(1)-(5-phospho-beta-D-ribosyl)glycinamide + L-glutamine + ATP + H2O = 2-formamido-N(1)-(5-O-phospho-beta-D-ribosyl)acetamidine + L-glutamate + ADP + phosphate + H(+). The protein operates within purine metabolism; IMP biosynthesis via de novo pathway; 5-amino-1-(5-phospho-D-ribosyl)imidazole from N(2)-formyl-N(1)-(5-phospho-D-ribosyl)glycinamide: step 1/2. In terms of biological role, part of the phosphoribosylformylglycinamidine synthase complex involved in the purines biosynthetic pathway. Catalyzes the ATP-dependent conversion of formylglycinamide ribonucleotide (FGAR) and glutamine to yield formylglycinamidine ribonucleotide (FGAM) and glutamate. The FGAM synthase complex is composed of three subunits. PurQ produces an ammonia molecule by converting glutamine to glutamate. PurL transfers the ammonia molecule to FGAR to form FGAM in an ATP-dependent manner. PurS interacts with PurQ and PurL and is thought to assist in the transfer of the ammonia molecule from PurQ to PurL. This chain is Phosphoribosylformylglycinamidine synthase subunit PurL, found in Thermus thermophilus (strain ATCC BAA-163 / DSM 7039 / HB27).